The following is a 354-amino-acid chain: S-adenosylmethionine:tRNA ribosyltransferase-isomerase (354 aa).

This sequence belongs to the QueA family. Monomer.

It is found in the cytoplasm. The catalysed reaction is 7-aminomethyl-7-carbaguanosine(34) in tRNA + S-adenosyl-L-methionine = epoxyqueuosine(34) in tRNA + adenine + L-methionine + 2 H(+). Its pathway is tRNA modification; tRNA-queuosine biosynthesis. Transfers and isomerizes the ribose moiety from AdoMet to the 7-aminomethyl group of 7-deazaguanine (preQ1-tRNA) to give epoxyqueuosine (oQ-tRNA). The polypeptide is S-adenosylmethionine:tRNA ribosyltransferase-isomerase (Pseudomonas savastanoi pv. phaseolicola (strain 1448A / Race 6) (Pseudomonas syringae pv. phaseolicola (strain 1448A / Race 6))).